Reading from the N-terminus, the 568-residue chain is Probable inactive poly [ADP-ribose] polymerase SRO1 (568 aa).

Over residues 1–18 (MEAKIVKVSDSSYKDGLG) the composition is skewed to basic and acidic residues. A disordered region spans residues 1–32 (MEAKIVKVSDSSYKDGLGKKRKHPGNYTPYDS). A WWE domain is found at 77–152 (RYFSYYKKTG…ETGVKTQLAW (76 aa)). Disordered stretches follow at residues 220–241 (DFQAVQRSSNGPNDEASEDSCS) and 453–500 (ILPT…RRPR). In terms of domain architecture, PARP catalytic spans 245-463 (DDAVEKWDKT…LPTTQSRHES (219 aa)). An RST domain is found at 497-568 (RRPRSPIMPF…TITGLQRSLG (72 aa)).

As to quaternary structure, interacts with DREB2A, DREB2B, DREB2C and NAC082. Expressed in young developing tissues, such as young leaves and flowers and root tips. In mature plants, expressed in vasculature of leaves and roots.

Its subcellular location is the nucleus matrix. Its function is as follows. Probable inactive ADP-ribosyltransferase that functions with RCD1 to regulate oxidative stress, hormonal and developmental responses. May regulate some stress-responsive genes. Seems to play a smaller developmental role than R. The polypeptide is Probable inactive poly [ADP-ribose] polymerase SRO1 (SRO1) (Arabidopsis thaliana (Mouse-ear cress)).